Reading from the N-terminus, the 110-residue chain is Thiosulfate sulfurtransferase GlpE (110 aa).

In terms of domain architecture, Rhodanese spans 17-105 (KQEGAVVVDI…WRATYPAETA (89 aa)). Cys65 functions as the Cysteine persulfide intermediate in the catalytic mechanism.

It belongs to the GlpE family.

It localises to the cytoplasm. The enzyme catalyses thiosulfate + hydrogen cyanide = thiocyanate + sulfite + 2 H(+). It catalyses the reaction thiosulfate + [thioredoxin]-dithiol = [thioredoxin]-disulfide + hydrogen sulfide + sulfite + 2 H(+). In terms of biological role, transferase that catalyzes the transfer of sulfur from thiosulfate to thiophilic acceptors such as cyanide or dithiols. May function in a CysM-independent thiosulfate assimilation pathway by catalyzing the conversion of thiosulfate to sulfite, which can then be used for L-cysteine biosynthesis. The sequence is that of Thiosulfate sulfurtransferase GlpE from Pseudomonas putida (strain GB-1).